Here is a 716-residue protein sequence, read N- to C-terminus: Fatty acid oxidation complex subunit alpha (716 aa).

The tract at residues 1–189 is enoyl-CoA hydratase/isomerase; sequence MIYQSPTIQV…KVGAVDAVVA (189 aa). A substrate-binding site is contributed by D296. The interval 311–716 is 3-hydroxyacyl-CoA dehydrogenase; that stretch reads KDVKSAAVLG…AANNGSYYQA (406 aa). Residues M324, D343, 400-402, K407, and S429 each bind NAD(+); that span reads VVE. The active-site For 3-hydroxyacyl-CoA dehydrogenase activity is H450. N453 is an NAD(+) binding site. Positions 500 and 660 each coordinate substrate.

The protein in the N-terminal section; belongs to the enoyl-CoA hydratase/isomerase family. In the C-terminal section; belongs to the 3-hydroxyacyl-CoA dehydrogenase family. Heterotetramer of two alpha chains (FadB) and two beta chains (FadA).

It carries out the reaction a (3S)-3-hydroxyacyl-CoA + NAD(+) = a 3-oxoacyl-CoA + NADH + H(+). The catalysed reaction is a (3S)-3-hydroxyacyl-CoA = a (2E)-enoyl-CoA + H2O. The enzyme catalyses a 4-saturated-(3S)-3-hydroxyacyl-CoA = a (3E)-enoyl-CoA + H2O. It catalyses the reaction (3S)-3-hydroxybutanoyl-CoA = (3R)-3-hydroxybutanoyl-CoA. It carries out the reaction a (3Z)-enoyl-CoA = a 4-saturated (2E)-enoyl-CoA. The catalysed reaction is a (3E)-enoyl-CoA = a 4-saturated (2E)-enoyl-CoA. It participates in lipid metabolism; fatty acid beta-oxidation. Functionally, involved in the aerobic and anaerobic degradation of long-chain fatty acids via beta-oxidation cycle. Catalyzes the formation of 3-oxoacyl-CoA from enoyl-CoA via L-3-hydroxyacyl-CoA. It can also use D-3-hydroxyacyl-CoA and cis-3-enoyl-CoA as substrate. The chain is Fatty acid oxidation complex subunit alpha from Shewanella sp. (strain MR-7).